Reading from the N-terminus, the 460-residue chain is Cysteine proteinase 7 (460 aa).

The signal sequence occupies residues 1–17 (MKVLSALCVLLVSVATA). Positions 18-111 (KQQLSEVEYR…TESDKIFDAS (94 aa)) are cleaved as a propeptide — activation peptide. Cystine bridges form between Cys131/Cys176 and Cys167/Cys210. Residue Cys134 is part of the active site. N-linked (GlcNAc...) asparagine glycosylation is found at Asn226 and Asn252. A disulfide bond links Cys268 and Cys445. The active site involves His275. Positions 285 to 409 (GSGSSGSHGG…GSSSGSNSNG (125 aa)) are disordered. The segment covering 294–359 (GSQSQSAGSD…QSGSQSGNSG (66 aa)) has biased composition (low complexity). Residues 367–385 (AGSGSGSGSGSGSGSGSGS) are compositionally biased toward gly residues. Residues 386–409 (VSGSASGSASGSASGSSSGSNSNG) are compositionally biased toward low complexity. Residue Asn423 is part of the active site.

This sequence belongs to the peptidase C1 family. In terms of processing, glycosylated; contains GlcNAc-alpha-1-P-Ser residues. Also N-glycosylated.

The protein localises to the lysosome. This chain is Cysteine proteinase 7 (cprG), found in Dictyostelium discoideum (Social amoeba).